A 93-amino-acid chain; its full sequence is Neutrophil cationic peptide 1 type A (93 aa).

An N-terminal signal peptide occupies residues 1 to 19 (MRTVPLFAACLLLTLMAQA). Residues 20 to 62 (EPLPRAADHSDTKMKGDREDHVAVISFWEEESTSLEDAGAGAG) constitute a propeptide that is removed on maturation. Intrachain disulfides connect C65-C93, C67-C82, and C72-C92.

It belongs to the alpha-defensin family.

The protein localises to the secreted. Has antibiotic, anti-fungi and antiviral activity. This chain is Neutrophil cationic peptide 1 type A, found in Cavia porcellus (Guinea pig).